Here is a 124-residue protein sequence, read N- to C-terminus: uncharacterized protein (124 aa).

An N-terminal signal peptide occupies residues 1–18 (MHIIKTLISVGVAFSLSA). Cysteine 19 is lipidated: N-palmitoyl cysteine. A lipid anchor (S-diacylglycerol cysteine) is attached at cysteine 19.

The protein resides in the cell membrane. This is an uncharacterized protein from Pasteurella multocida (strain Pm70).